A 499-amino-acid chain; its full sequence is Hepatic triacylglycerol lipase (499 aa).

Residues 1 to 21 (MGSPLCVPIFLAVCILIQSST) form the signal peptide. Asn-78 is a glycosylation site (N-linked (GlcNAc...) asparagine). The Nucleophile role is filled by Ser-168. The Charge relay system role is filled by Asp-194. An essential for determining substrate specificity region spans residues 254-277 (CHFLELYKHIAQHGLNALSQTIKC). His-279 acts as the Charge relay system in catalysis. The region spanning 352–486 (YHYQFKIQFI…HPTQEKNFVR (135 aa)) is the PLAT domain. Asn-397 carries N-linked (GlcNAc...) asparagine glycosylation.

Belongs to the AB hydrolase superfamily. Lipase family. Homodimer.

The protein resides in the secreted. The enzyme catalyses a triacylglycerol + H2O = a diacylglycerol + a fatty acid + H(+). It catalyses the reaction a 1-acyl-sn-glycero-3-phosphocholine + H2O = sn-glycerol 3-phosphocholine + a fatty acid + H(+). It carries out the reaction a 1,2-diacyl-sn-glycero-3-phosphocholine + H2O = a 2-acyl-sn-glycero-3-phosphocholine + a fatty acid + H(+). The catalysed reaction is 1,2,3-tri-(9Z-octadecenoyl)-glycerol + H2O = di-(9Z)-octadecenoylglycerol + (9Z)-octadecenoate + H(+). The enzyme catalyses 1,2-di-(9Z-octadecenoyl)-sn-glycero-3-phosphocholine + H2O = (9Z-octadecenoyl)-sn-glycero-3-phosphocholine + (9Z)-octadecenoate + H(+). It catalyses the reaction 1,2,3-tributanoylglycerol + H2O = dibutanoylglycerol + butanoate + H(+). It carries out the reaction 1,2-dihexadecanoyl-sn-glycero-3-phosphocholine + H2O = hexadecanoyl-sn-glycero-3-phosphocholine + hexadecanoate + H(+). The catalysed reaction is 1,2-di-(9Z-octadecenoyl)-sn-glycerol + H2O = 2-(9Z-octadecenoyl)-glycerol + (9Z)-octadecenoate + H(+). The enzyme catalyses 1,2,3-tri-(9Z-octadecenoyl)-glycerol + H2O = 2,3-di-(9Z)-octadecenoyl-sn-glycerol + (9Z)-octadecenoate + H(+). It catalyses the reaction 1-(9Z-octadecenoyl)-sn-glycero-3-phospho-L-serine + H2O = sn-glycero-3-phospho-L-serine + (9Z)-octadecenoate + H(+). It carries out the reaction 1-hexadecanoyl-sn-glycero-3-phosphocholine + H2O = sn-glycerol 3-phosphocholine + hexadecanoate + H(+). The catalysed reaction is 1,3-di-(9Z-octadecenoyl)-glycerol + H2O = 3-(9Z-octadecenoyl)-sn-glycerol + (9Z)-octadecenoate + H(+). In terms of biological role, catalyzes the hydrolysis of triglycerides and phospholipids present in circulating plasma lipoproteins, including chylomicrons, intermediate density lipoproteins (IDL), low density lipoproteins (LDL) of large size and high density lipoproteins (HDL), releasing free fatty acids (FFA) and smaller lipoprotein particles. Also exhibits lysophospholipase activity. Can hydrolyze both neutral lipid and phospholipid substrates but shows a greater binding affinity for neutral lipid substrates than phospholipid substrates. In native LDL, preferentially hydrolyzes the phosphatidylcholine species containing polyunsaturated fatty acids at sn-2 position. This Oryctolagus cuniculus (Rabbit) protein is Hepatic triacylglycerol lipase (LIPC).